Reading from the N-terminus, the 48-residue chain is Delta-stichotoxin-Hcr1e (48 aa).

Cystine bridges form between C3–C43, C5–C33, and C26–C44.

Belongs to the sea anemone sodium channel inhibitory toxin family. Type II subfamily.

The protein localises to the secreted. It localises to the nematocyst. Binds to site 3 of voltage-gated sodium channels and inhibits the inactivation process. This is Delta-stichotoxin-Hcr1e from Radianthus crispa (Leathery sea anemone).